A 259-amino-acid polypeptide reads, in one-letter code: Protein N-terminal and lysine N-methyltransferase efm7 (259 aa).

Residues W56, 83–85 (GAA), D105, W139, and A163 contribute to the S-adenosyl-L-methionine site.

Belongs to the class I-like SAM-binding methyltransferase superfamily. EFM7 family.

It localises to the cytoplasm. In terms of biological role, S-adenosyl-L-methionine-dependent protein methyltransferase that trimethylates the N-terminal glycine 'Gly-2' of elongation factor 1-alpha, before also catalyzing the mono- and dimethylation of 'Lys-3'. This Aspergillus fumigatus (strain ATCC MYA-4609 / CBS 101355 / FGSC A1100 / Af293) (Neosartorya fumigata) protein is Protein N-terminal and lysine N-methyltransferase efm7.